The primary structure comprises 473 residues: Glutamate--tRNA ligase 1 (473 aa).

The short motif at 11–21 (PSPTGYLHIGG) is the 'HIGH' region element. Basic and acidic residues predominate over residues 113 to 133 (KARAEGRPPRYDGRWRDRDPS). Positions 113–136 (KARAEGRPPRYDGRWRDRDPSEAP) are disordered. A 'KMSKS' region motif is present at residues 240 to 244 (KLSKR). Lysine 243 is a binding site for ATP.

This sequence belongs to the class-I aminoacyl-tRNA synthetase family. Glutamate--tRNA ligase type 1 subfamily. In terms of assembly, monomer.

The protein resides in the cytoplasm. It carries out the reaction tRNA(Glu) + L-glutamate + ATP = L-glutamyl-tRNA(Glu) + AMP + diphosphate. Functionally, catalyzes the attachment of glutamate to tRNA(Glu) in a two-step reaction: glutamate is first activated by ATP to form Glu-AMP and then transferred to the acceptor end of tRNA(Glu). This Brucella melitensis biotype 1 (strain ATCC 23456 / CCUG 17765 / NCTC 10094 / 16M) protein is Glutamate--tRNA ligase 1.